A 247-amino-acid chain; its full sequence is SPX domain-containing protein 5 (247 aa).

Residues 1 to 139 (MKFGKRLKRQ…GGVLRLPVIA (139 aa)) form the SPX domain. Residues 224–247 (SDWLIQSVQPPPPPPPSSPLIIPT) form a disordered region. Residues 232-241 (QPPPPPPPSS) are compositionally biased toward pro residues.

The chain is SPX domain-containing protein 5 (SPX5) from Oryza sativa subsp. indica (Rice).